We begin with the raw amino-acid sequence, 631 residues long: Origin recognition complex subunit 1 (631 aa).

Low complexity-rich tracts occupy residues 1–14 (MTDE…YPPI) and 22–37 (KLNN…NNNH). Positions 1–164 (MTDESSSSIS…EEEDEEGKFN (164 aa)) are disordered. Residues 55-80 (DNEKIGFSDPENEKINKHKASFKDSN) show a composition bias toward basic and acidic residues. Over residues 91-104 (EDTDDDDYEDEDED) the composition is skewed to acidic residues. Residues 105–133 (ENHKIKDESDNSEDFNNHTKNTTDLDEGF) show a composition bias toward basic and acidic residues. Over residues 141 to 160 (ESEEEEEEEEYEEEEEEDEE) the composition is skewed to acidic residues. ATP-binding positions include Val230 and 265–273 (GMPGTGKTA). Residues Asp361 and Glu362 each coordinate Mg(2+). Glu362, Asn395, and Arg460 together coordinate ATP.

The protein belongs to the ORC1 family. As to quaternary structure, ORC is composed of six subunits.

Its subcellular location is the nucleus. Its function is as follows. Component of the origin recognition complex (ORC) that binds origins of replication. DNA-binding is ATP-dependent, however specific DNA sequences that define origins of replication have not been identified so far. ORC is required to assemble the pre-replication complex necessary to initiate DNA replication. The polypeptide is Origin recognition complex subunit 1 (orcA) (Dictyostelium discoideum (Social amoeba)).